Here is a 309-residue protein sequence, read N- to C-terminus: Tagatose-6-phosphate kinase (309 aa).

The protein belongs to the carbohydrate kinase PfkB family. LacC subfamily.

The catalysed reaction is D-tagatofuranose 6-phosphate + ATP = D-tagatofuranose 1,6-bisphosphate + ADP + H(+). It functions in the pathway carbohydrate metabolism; D-tagatose 6-phosphate degradation; D-glyceraldehyde 3-phosphate and glycerone phosphate from D-tagatose 6-phosphate: step 1/2. In Streptococcus pyogenes serotype M3 (strain SSI-1), this protein is Tagatose-6-phosphate kinase.